A 370-amino-acid chain; its full sequence is 4-hydroxy-3-methylbut-2-en-1-yl diphosphate synthase (flavodoxin) (370 aa).

4 residues coordinate [4Fe-4S] cluster: Cys270, Cys273, Cys305, and Glu312.

Belongs to the IspG family. [4Fe-4S] cluster serves as cofactor.

It catalyses the reaction (2E)-4-hydroxy-3-methylbut-2-enyl diphosphate + oxidized [flavodoxin] + H2O + 2 H(+) = 2-C-methyl-D-erythritol 2,4-cyclic diphosphate + reduced [flavodoxin]. It functions in the pathway isoprenoid biosynthesis; isopentenyl diphosphate biosynthesis via DXP pathway; isopentenyl diphosphate from 1-deoxy-D-xylulose 5-phosphate: step 5/6. Functionally, converts 2C-methyl-D-erythritol 2,4-cyclodiphosphate (ME-2,4cPP) into 1-hydroxy-2-methyl-2-(E)-butenyl 4-diphosphate. The polypeptide is 4-hydroxy-3-methylbut-2-en-1-yl diphosphate synthase (flavodoxin) (Hamiltonella defensa subsp. Acyrthosiphon pisum (strain 5AT)).